We begin with the raw amino-acid sequence, 225 residues long: Insulin-induced gene 2 protein (225 aa).

At 1–28 (MAEGETESPGPKKCGPYISSVTSQSVNL) the chain is on the cytoplasmic side. Residues 29–51 (MIRGVVLFFIGVFLALVLNLLQI) traverse the membrane as a helical segment. Residues 52 to 70 (QRNVTLFPPDVIASIFSSA) lie on the Lumenal side of the membrane. Residues 71–88 (WWVPPCCGTASAVIGLLY) form a helical membrane-spanning segment. The Cytoplasmic segment spans residues 89-103 (PCIDRHLGEPHKFKR). A helical membrane pass occupies residues 104–126 (EWSSVMRCVAVFVGINHASAKVD). Residues 127-129 (FDN) are Lumenal-facing. The chain crosses the membrane as a helical span at residues 130 to 148 (NIQLSLTLAALSIGLWWTF). Residues 149 to 153 (DRSRS) lie on the Cytoplasmic side of the membrane. Serine 151 bears the Phosphoserine; by PCK1 mark. Residues 154–175 (GFGLGVGIAFLATVVTQLLVYN) traverse the membrane as a helical segment. Residues 176 to 189 (GVYQYTSPDFLYVR) lie on the Lumenal side of the membrane. The chain crosses the membrane as a helical span at residues 190–207 (SWLPCIFFAGGITMGNIG). The Cytoplasmic portion of the chain corresponds to 208–225 (RQLAMYECKVIAEKSHQE). Cysteine sulfenic acid (-SOH); alternate is present on cysteine 215. Cysteine 215 participates in a covalent cross-link: Glycyl cysteine thioester (Cys-Gly) (interchain with G-Cter in ubiquitin); alternate. Residues 219–225 (AEKSHQE) carry the KxHxx motif.

The protein belongs to the INSIG family. As to quaternary structure, interacts with SCAP; interaction is direct and only takes place in the presence of sterols; it prevents interaction between SCAP and the coat protein complex II (COPII). Associates with the SCAP-SREBP complex (composed of SCAP and SREBF1/SREBP1 or SREBF2/SREBP2); association is mediated via its interaction with SCAP and only takes place in the presence of sterols. Interacts with RNF139. Interacts with RNF145. In terms of processing, phosphorylation at Ser-151 by PCK1 reduces binding to oxysterol, disrupting the interaction between INSIG2 and SCAP, thereby promoting nuclear translocation of SREBP proteins (SREBF1/SREBP1 or SREBF2/SREBP2) and subsequent transcription of downstream lipogenesis-related genes. Post-translationally, polyubiquitinated by AMFR/gp78 at Cys-215 in some tissues such as adipose tissues, undifferentiated myoblasts and liver, leading to its degradation. In differentiated myotubes, Cys-215 oxidation prevents ubiquitination at the same site, resulting in protein stabilization. Oxidized at Cys-215 in differentiated myotubes, preventing ubiquitination at the same site, and resulting in protein stabilization.

Its subcellular location is the endoplasmic reticulum membrane. In terms of biological role, oxysterol-binding protein that mediates feedback control of cholesterol synthesis by controlling both endoplasmic reticulum to Golgi transport of SCAP and degradation of HMGCR. Acts as a negative regulator of cholesterol biosynthesis by mediating the retention of the SCAP-SREBP complex in the endoplasmic reticulum, thereby blocking the processing of sterol regulatory element-binding proteins (SREBPs) SREBF1/SREBP1 and SREBF2/SREBP2. Binds oxysterol, including 22-hydroxycholesterol, 24-hydroxycholesterol, 25-hydroxycholesterol and 27-hydroxycholesterol, regulating interaction with SCAP and retention of the SCAP-SREBP complex in the endoplasmic reticulum. In presence of oxysterol, interacts with SCAP, retaining the SCAP-SREBP complex in the endoplasmic reticulum, thereby preventing SCAP from escorting SREBF1/SREBP1 and SREBF2/SREBP2 to the Golgi. Sterol deprivation or phosphorylation by PCK1 reduce oxysterol-binding, disrupting the interaction between INSIG2 and SCAP, thereby promoting Golgi transport of the SCAP-SREBP complex, followed by processing and nuclear translocation of SREBF1/SREBP1 and SREBF2/SREBP2. Also regulates cholesterol synthesis by regulating degradation of HMGCR: initiates the sterol-mediated ubiquitin-mediated endoplasmic reticulum-associated degradation (ERAD) of HMGCR via recruitment of the reductase to the ubiquitin ligase RNF139. The polypeptide is Insulin-induced gene 2 protein (Homo sapiens (Human)).